A 63-amino-acid polypeptide reads, in one-letter code: DNA gyrase inhibitor YacG (63 aa).

4 residues coordinate Zn(2+): cysteine 10, cysteine 13, cysteine 29, and cysteine 33.

It belongs to the DNA gyrase inhibitor YacG family. In terms of assembly, interacts with GyrB. It depends on Zn(2+) as a cofactor.

Its function is as follows. Inhibits all the catalytic activities of DNA gyrase by preventing its interaction with DNA. Acts by binding directly to the C-terminal domain of GyrB, which probably disrupts DNA binding by the gyrase. In Chromobacterium violaceum (strain ATCC 12472 / DSM 30191 / JCM 1249 / CCUG 213 / NBRC 12614 / NCIMB 9131 / NCTC 9757 / MK), this protein is DNA gyrase inhibitor YacG.